A 310-amino-acid polypeptide reads, in one-letter code: Thioredoxin reductase (310 aa).

34 to 41 is an FAD binding site; sequence NGMQPGGQ. An intrachain disulfide couples Cys-135 to Cys-138. 281-290 contacts FAD; sequence DVQDKIYRQA.

The protein belongs to the class-II pyridine nucleotide-disulfide oxidoreductase family. As to quaternary structure, homodimer. Requires FAD as cofactor.

The protein resides in the cytoplasm. It catalyses the reaction [thioredoxin]-dithiol + NADP(+) = [thioredoxin]-disulfide + NADPH + H(+). In Rickettsia prowazekii (strain Madrid E), this protein is Thioredoxin reductase (trxB).